The chain runs to 212 residues: HTH-type transcriptional regulator RutR (212 aa).

Positions 17–77 constitute an HTH tetR-type domain; sequence SAKKKAILSA…AVLRQILDIW (61 aa). Positions 39–58 form a DNA-binding region, H-T-H motif; that stretch reads TRLEQIAELAGVSKTNLLYY.

Homodimer.

Functionally, master transcription regulator which represses the degradation of pyrimidines (rutABCDEFG) and purines (gcl operon) for maintenance of metabolic balance between pyrimidines and purines. It also regulates the synthesis of pyrimidine nucleotides and arginine from glutamine (carAB) and the supply of glutamate (gadABWX). The chain is HTH-type transcriptional regulator RutR (rutR) from Escherichia coli O157:H7.